The following is a 348-amino-acid chain: Anthranilate phosphoribosyltransferase (348 aa).

Residues G91, G94–D95, T99, N101–T104, K119–G127, and S131 contribute to the 5-phospho-alpha-D-ribose 1-diphosphate site. G91 provides a ligand contact to anthranilate. S103 contributes to the Mg(2+) binding site. Anthranilate is bound at residue N122. R177 serves as a coordination point for anthranilate. D236 and E237 together coordinate Mg(2+).

This sequence belongs to the anthranilate phosphoribosyltransferase family. In terms of assembly, homodimer. Mg(2+) is required as a cofactor.

The catalysed reaction is N-(5-phospho-beta-D-ribosyl)anthranilate + diphosphate = 5-phospho-alpha-D-ribose 1-diphosphate + anthranilate. The protein operates within amino-acid biosynthesis; L-tryptophan biosynthesis; L-tryptophan from chorismate: step 2/5. Functionally, catalyzes the transfer of the phosphoribosyl group of 5-phosphorylribose-1-pyrophosphate (PRPP) to anthranilate to yield N-(5'-phosphoribosyl)-anthranilate (PRA). The sequence is that of Anthranilate phosphoribosyltransferase from Synechococcus elongatus (strain ATCC 33912 / PCC 7942 / FACHB-805) (Anacystis nidulans R2).